Consider the following 68-residue polypeptide: Neuronal regeneration-related protein (68 aa).

The disordered stretch occupies residues 22–54 (EGRLPKGRLPVPKEVNRKKNDETNAASLTPLGS). Over residues 44–54 (TNAASLTPLGS) the composition is skewed to polar residues. A Phosphoserine modification is found at Ser59.

As to quaternary structure, interacts with the latency-associated peptides (LAP) of TGFB1 and TGFB2; the interaction results in a decrease in TGFB autoinduction. Interacts with FLNA. Post-translationally, phosphorylated on Ser-59. Phosphorylation decreases stability and activity. Expressed in lung (at protein level).

Its subcellular location is the cytoplasm. In terms of biological role, may have roles in neural function. Ectopic expression augments motility of gliomas. Also promotes axonal regeneration. May also have functions in cellular differentiation. Induces differentiation of fibroblast into myofibroblast and myofibroblast ameboid migration. Increases retinoic-acid regulation of lipid-droplet biogenesis. Down-regulates the expression of TGFB1 and TGFB2 but not of TGFB3. May play a role in the regulation of alveolar generation. The protein is Neuronal regeneration-related protein (NREP) of Homo sapiens (Human).